The primary structure comprises 664 residues: Probable LRR receptor-like serine/threonine-protein kinase At1g63430 (664 aa).

The first 22 residues, 1–22, serve as a signal peptide directing secretion; sequence MRSKYFCSLALVLGLFFVSCDG. The Extracellular segment spans residues 23–288; that stretch reads FASNEVQALR…KHHRASKPKW (266 aa). The N-linked (GlcNAc...) asparagine glycan is linked to asparagine 75. 4 LRR repeats span residues 94–116, 118–140, 142–165, and 166–178; these read YLQE…IGNL, NLKI…IGSL, GIMI…GNLK, and YLRE…NRLQ. N-linked (GlcNAc...) asparagine glycosylation is present at asparagine 197. The helical transmembrane segment at 289-309 threads the bilayer; it reads LLALEIVTGSMVGLLLLVALF. At 310–664 the chain is on the cytoplasmic side; that stretch reads SAVHRWNNRS…LAWAELALDS (355 aa). A Protein kinase domain is found at 360 to 642; sequence EDFSNIIGLS…ELCETLESRI (283 aa).

Belongs to the protein kinase superfamily. Ser/Thr protein kinase family.

The protein localises to the cell membrane. It carries out the reaction L-seryl-[protein] + ATP = O-phospho-L-seryl-[protein] + ADP + H(+). It catalyses the reaction L-threonyl-[protein] + ATP = O-phospho-L-threonyl-[protein] + ADP + H(+). The protein is Probable LRR receptor-like serine/threonine-protein kinase At1g63430 of Arabidopsis thaliana (Mouse-ear cress).